A 350-amino-acid chain; its full sequence is D-alanine--D-alanine ligase (350 aa).

The 202-residue stretch at 143 to 344 (KRILSTFGIS…FKSLINKLIL (202 aa)) folds into the ATP-grasp domain. 172 to 227 (INNIKFPCCIKPSNQGSSFGVNVANDFISLKESIDVAFLYSKKILIEPFIQGREIE) is an ATP binding site. Mg(2+) is bound by residues Asp298, Glu311, and Asn313.

The protein belongs to the D-alanine--D-alanine ligase family. It depends on Mg(2+) as a cofactor. Requires Mn(2+) as cofactor.

It is found in the cytoplasm. It catalyses the reaction 2 D-alanine + ATP = D-alanyl-D-alanine + ADP + phosphate + H(+). Its pathway is cell wall biogenesis; peptidoglycan biosynthesis. Cell wall formation. In Wigglesworthia glossinidia brevipalpis, this protein is D-alanine--D-alanine ligase.